Reading from the N-terminus, the 716-residue chain is FLYWCH-type zinc finger-containing protein 1 (716 aa).

A disordered region spans residues methionine 1 to lysine 35. A Phosphoserine modification is found at serine 21. The FLYWCH-type 1 zinc-finger motif lies at phenylalanine 116–histidine 174. Residue lysine 134 forms a Glycyl lysine isopeptide (Lys-Gly) (interchain with G-Cter in SUMO2) linkage. The interval proline 191–threonine 231 is disordered. Low complexity predominate over residues leucine 195 to glycine 204. Position 261 is a phosphoserine (serine 261). The segment at phenylalanine 273–histidine 331 adopts an FLYWCH-type 2 zinc-finger fold. Serine 371 carries the phosphoserine modification. The tract at residues glycine 377–phenylalanine 421 is disordered. Residue lysine 393 forms a Glycyl lysine isopeptide (Lys-Gly) (interchain with G-Cter in SUMO2) linkage. The FLYWCH-type 3 zinc finger occupies phenylalanine 421–histidine 479. Serine 503 carries the post-translational modification Phosphoserine. An FLYWCH-type 4 zinc finger spans residues phenylalanine 509–histidine 567. Serine 591 carries the post-translational modification Phosphoserine. Residues phenylalanine 600 to histidine 658 form an FLYWCH-type 5 zinc finger. Residue lysine 685 forms a Glycyl lysine isopeptide (Lys-Gly) (interchain with G-Cter in SUMO2) linkage. A Phosphoserine modification is found at serine 696.

Interacts with CTNNB1 (when unphosphorylated), perhaps preventing interaction of CTNNB1 with TCF4, and thereby regulating transcription activation; phosphorylation of CTNNB1 may inhibit the interaction.

It is found in the nucleus. The protein resides in the chromosome. The protein localises to the centromere. Transcription cofactor. Negatively regulates transcription activation by catenin beta-1 CTNNB1, perhaps acting by competing with TCF4 for CTNNB1 binding. May play a role in DNA-damage response signaling. Binds specifically to DNA sequences at peri-centromeric chromatin loci. The sequence is that of FLYWCH-type zinc finger-containing protein 1 (FLYWCH1) from Homo sapiens (Human).